A 337-amino-acid polypeptide reads, in one-letter code: Palmitoyltransferase ZDHHC15 (337 aa).

Topologically, residues 1–20 are cytoplasmic; it reads MRRGWKMALSGGLRCCRRVL. Residues 21 to 41 traverse the membrane as a helical segment; sequence SWVPVLVIVLVVLWSYYAYVF. Over 42–56 the chain is Lumenal; the sequence is ELCLVTVLSPAEKVI. A helical membrane pass occupies residues 57–77; it reads YLILYHAIFVFFAWTYWKSIF. The Cytoplasmic segment spans residues 78–172; sequence TLPQQPNQKF…NNCIGFSNYK (95 aa). A DHHC domain is found at 129–179; it reads RFCDRCHLIKPDRCHHCSVCAMCVLKMDHHCPWVNNCIGFSNYKFFLQFLA. 7 residues coordinate Zn(2+): Cys-131, Cys-134, His-144, Cys-145, Cys-148, Cys-151, and His-158. The S-palmitoyl cysteine intermediate role is filled by Cys-159. Cys-165 contacts Zn(2+). A helical membrane pass occupies residues 173–193; it reads FFLQFLAYSVLYCLYIATTVF. Residues 194–210 are Lumenal-facing; the sequence is SYFIKYWRGELPSVRSK. The helical transmembrane segment at 211–234 threads the bilayer; that stretch reads FHVLFLLFVACMFFVSLVILFGYH. The Cytoplasmic segment spans residues 235–337; it reads CWLVSRNKTT…SSSLAVESET (103 aa). The disordered stretch occupies residues 293 to 337; sequence HSFPMRSMNESQNPLLANEEPWEDNEDDSRDYPEGSSSLAVESET. The span at 312-321 shows a compositional bias: acidic residues; that stretch reads EPWEDNEDDS. A compositionally biased stretch (polar residues) spans 327 to 337; the sequence is GSSSLAVESET.

The protein belongs to the DHHC palmitoyltransferase family. In terms of processing, autopalmitoylated (in vitro). Expressed mainly in brain.

The protein resides in the golgi apparatus membrane. It localises to the postsynaptic density. It carries out the reaction L-cysteinyl-[protein] + hexadecanoyl-CoA = S-hexadecanoyl-L-cysteinyl-[protein] + CoA. The catalysed reaction is L-cysteinyl-[protein] + tetradecanoyl-CoA = S-tetradecanoyl-L-cysteinyl-[protein] + CoA. It catalyses the reaction L-cysteinyl-[protein] + octadecanoyl-CoA = S-octadecanoyl-L-cysteinyl-[protein] + CoA. With respect to regulation, inhibited by 2-bromopalmitate. In terms of biological role, palmitoyltransferase that catalyzes the addition of palmitate onto various protein substrates. Has no stringent fatty acid selectivity and in addition to palmitate can also transfer onto target proteins myristate from tetradecanoyl-CoA and stearate from octadecanoyl-CoA. Palmitoylates IGF2R and SORT1, promoting their partitioning to an endosomal membrane subdomain where they can interact with the retromer cargo-selective complex. Thereby, regulates retrograde transport from endosomes to the Golgi apparatus of these lysosomal sorting receptors and plays a role in trafficking of lysosomal proteins. In the nervous system, catalyzes the palmitoylation of DLG4/PSD95 and regulates its synaptic clustering and function in synaptogenesis. Could be involved in the differentiation of dopaminergic neurons and the development of the diencephalon. Could also catalyze the palmitoylation of GAP43. Could also palmitoylate DNAJC5 and regulate its localization to the Golgi membrane. Could also palmitoylate FYN as shown in vitro. May palmitoylate CALHM3 subunit of gustatory voltage-gated ion channels and modulate channel gating and kinetics. This Mus musculus (Mouse) protein is Palmitoyltransferase ZDHHC15.